We begin with the raw amino-acid sequence, 462 residues long: Cysteine--tRNA ligase (462 aa).

Cys-24 serves as a coordination point for Zn(2+). The 'HIGH' region motif lies at 26 to 36; that stretch reads PTVYDDAHLGH. Residues Cys-199, His-224, and Glu-228 each contribute to the Zn(2+) site. The short motif at 256-260 is the 'KMSKS' region element; the sequence is KMSKS. Lys-259 provides a ligand contact to ATP.

It belongs to the class-I aminoacyl-tRNA synthetase family. Monomer. Zn(2+) serves as cofactor.

The protein resides in the cytoplasm. The enzyme catalyses tRNA(Cys) + L-cysteine + ATP = L-cysteinyl-tRNA(Cys) + AMP + diphosphate. The sequence is that of Cysteine--tRNA ligase from Campylobacter jejuni subsp. jejuni serotype O:6 (strain 81116 / NCTC 11828).